The sequence spans 49 residues: Osteocalcin (49 aa).

A Gla domain is found at 1–47 (YLDHGLGAPAPYPDPLEPRREVCELNPDCDELADHIGFQEAYRRFYG). Pro9 carries the post-translational modification Hydroxyproline. The Ca(2+) site is built by Glu17, Glu21, Glu24, and Asp30. 3 positions are modified to 4-carboxyglutamate: Glu17, Glu21, and Glu24. Cysteines 23 and 29 form a disulfide.

Belongs to the osteocalcin/matrix Gla protein family. Post-translationally, gamma-carboxyglutamate residues are formed by vitamin K dependent carboxylation by GGCX. These residues are essential for the binding of calcium. Decarboxylation promotes the hormone activity.

The protein resides in the secreted. The carboxylated form is one of the main organic components of the bone matrix, which constitutes 1-2% of the total bone protein. It acts as a negative regulator of bone formation and is required to limit bone formation without impairing bone resorption or mineralization. The carboxylated form binds strongly to apatite and calcium. Functionally, the uncarboxylated form acts as a hormone secreted by osteoblasts, which regulates different cellular processes, such as energy metabolism, male fertility and brain development. Regulates of energy metabolism by acting as a hormone favoring pancreatic beta-cell proliferation, insulin secretion and sensitivity and energy expenditure. Uncarboxylated osteocalcin hormone also promotes testosterone production in the testes: acts as a ligand for G protein-coupled receptor GPRC6A at the surface of Leydig cells, initiating a signaling response that promotes the expression of enzymes required for testosterone synthesis in a CREB-dependent manner. Also acts as a regulator of brain development: osteocalcin hormone crosses the blood-brain barrier and acts as a ligand for GPR158 on neurons, initiating a signaling response that prevents neuronal apoptosis in the hippocampus, favors the synthesis of all monoamine neurotransmitters and inhibits that of gamma-aminobutyric acid (GABA). Osteocalcin also crosses the placenta during pregnancy and maternal osteocalcin is required for fetal brain development. This Sus scrofa (Pig) protein is Osteocalcin (BGLAP).